Here is a 252-residue protein sequence, read N- to C-terminus: LexA repressor (252 aa).

The interval 1-46 (MPEENRGGHQPYTEESSVSALHPVRTDDSVGSSAEQTGDAPTLTER) is disordered. Residues 67-87 (IREIGEAVGLSSPSSVAHQLK) constitute a DNA-binding region (H-T-H motif). Residues serine 176 and lysine 213 each act as for autocatalytic cleavage activity in the active site.

The protein belongs to the peptidase S24 family. Homodimer.

It carries out the reaction Hydrolysis of Ala-|-Gly bond in repressor LexA.. Represses a number of genes involved in the response to DNA damage (SOS response), including recA and lexA. In the presence of single-stranded DNA, RecA interacts with LexA causing an autocatalytic cleavage which disrupts the DNA-binding part of LexA, leading to derepression of the SOS regulon and eventually DNA repair. This is LexA repressor from Thermobifida fusca (strain YX).